Consider the following 94-residue polypeptide: Co-chaperonin GroES (94 aa).

It belongs to the GroES chaperonin family. As to quaternary structure, heptamer of 7 subunits arranged in a ring. Interacts with the chaperonin GroEL.

Its subcellular location is the cytoplasm. Functionally, together with the chaperonin GroEL, plays an essential role in assisting protein folding. The GroEL-GroES system forms a nano-cage that allows encapsulation of the non-native substrate proteins and provides a physical environment optimized to promote and accelerate protein folding. GroES binds to the apical surface of the GroEL ring, thereby capping the opening of the GroEL channel. The chain is Co-chaperonin GroES from Bacillus mycoides (strain KBAB4) (Bacillus weihenstephanensis).